A 363-amino-acid chain; its full sequence is MLKTTPLNAAHRGMHAKMVDFGGWDMPLHYGSQLDEHHAVRRDAGMFDVSHMLTVDLHGENVRQFLRGLVANNIDKLTVPGKALYTCMLNPAGGIIDDLIIYFLSESWFRLVVNAGTADKDIDWITLQSSQHAPDLTITPRRDLAMIAVQGPNARAKVWAVIPDSKAASEDLKPFQSVAFGNYFIARTGYTGEDGFEITLPADEAAAFWQKLHAAGVAPAGLGSRDTLRLEAGMNLYGQDMDETTNPLESGLAWTVDLKSERDFIGKQALLEKPVNQQLVGLVLLDKGVLRNHQKIITQHEGIAGEGEITSGGFSPTLNQSIALARIPVGIAAGEQVHVVVRDKQLAARVVKYPFVRNGQALI.

This sequence belongs to the GcvT family. In terms of assembly, the glycine cleavage system is composed of four proteins: P, T, L and H.

It carries out the reaction N(6)-[(R)-S(8)-aminomethyldihydrolipoyl]-L-lysyl-[protein] + (6S)-5,6,7,8-tetrahydrofolate = N(6)-[(R)-dihydrolipoyl]-L-lysyl-[protein] + (6R)-5,10-methylene-5,6,7,8-tetrahydrofolate + NH4(+). Functionally, the glycine cleavage system catalyzes the degradation of glycine. The protein is Aminomethyltransferase of Nitrosomonas eutropha (strain DSM 101675 / C91 / Nm57).